An 84-amino-acid chain; its full sequence is MAELSLAELREIMRQSLGEDEVPDLADADTVTFEDLGLDSLAVLETVNHIERTYGVKLPEEELAEIRTPHSMLIFVNERLRAAV.

Positions 3-80 constitute a Carrier domain; it reads ELSLAELREI…SMLIFVNERL (78 aa). Residue serine 40 is modified to O-(pantetheine 4'-phosphoryl)serine.

It participates in antibiotic biosynthesis; daunorubicin biosynthesis. It functions in the pathway antibiotic biosynthesis; carminomycin biosynthesis. Its pathway is antibiotic biosynthesis; rhodomycin biosynthesis. The protein operates within antibiotic biosynthesis; aclacinomycin biosynthesis. Involved in the biosynthesis of aklanonate which is an important precursor common to the formation of the clinically significant anthracyclines such as carminomycin, daunorubicin (daunomycin), rhodomycin, aclacinomycin T (aklavin) and aclacinomycin A (aclarubicin). These compounds are aromatic polyketide antibiotics that exhibit high cytotoxicity and are widely applied in the chemotherapy of a variety of cancers. The protein is Anthracycline acyl carrier protein DauA (dauA) of Streptomyces sp. (strain C5).